Reading from the N-terminus, the 284-residue chain is ATP synthase subunit beta, chloroplastic (284 aa).

The protein belongs to the ATPase alpha/beta chains family. In terms of assembly, F-type ATPases have 2 components, CF(1) - the catalytic core - and CF(0) - the membrane proton channel. CF(1) has five subunits: alpha(3), beta(3), gamma(1), delta(1), epsilon(1). CF(0) has four main subunits: a(1), b(1), b'(1) and c(9-12).

It localises to the plastid. It is found in the chloroplast thylakoid membrane. It carries out the reaction ATP + H2O + 4 H(+)(in) = ADP + phosphate + 5 H(+)(out). Produces ATP from ADP in the presence of a proton gradient across the membrane. The catalytic sites are hosted primarily by the beta subunits. The polypeptide is ATP synthase subunit beta, chloroplastic (atpB) (Asplenium nidus (Bird's nest fern)).